Reading from the N-terminus, the 116-residue chain is Urease subunit beta (116 aa).

Positions 97-116 (IQGPLDAGTAETAPGLPQQP) are disordered.

The protein belongs to the urease beta subunit family. In terms of assembly, heterotrimer of UreA (gamma), UreB (beta) and UreC (alpha) subunits. Three heterotrimers associate to form the active enzyme.

The protein resides in the cytoplasm. It carries out the reaction urea + 2 H2O + H(+) = hydrogencarbonate + 2 NH4(+). Its pathway is nitrogen metabolism; urea degradation; CO(2) and NH(3) from urea (urease route): step 1/1. This chain is Urease subunit beta, found in Paracidovorax citrulli (strain AAC00-1) (Acidovorax citrulli).